Consider the following 663-residue polypeptide: MALCYGTFWGYPKMLEAANLMEGLVDIGPWVTLPRGQPEVLEWGLPKDQDSVAFEDVAVNFTHEEWALLGPSQKNLYRDVMRETIRNLNCIGMKWENQNIDDQHQNLRRNPRCDVVERFGKSKDGSQCGETLSQIRNSIVNKNTPARVDACGSSVNGEVIMGHSSLNCYIRVDTGHKHRECHEYAEKSYTHKQCGKGLSYRHSFQTCERPHTGKKPYDCKECGKTFSSPGNLRRHMVVKGGDGPYKCELCGKAFFWPSLLRMHERTHTGEKPYECKQCSKAFPVYSSYLRHEKIHTGEKPYECKQCSKAFPDYSSYLRHERTHTGEKPYKCKQCGKAFSVSGSLRVHERIHTGEKPYTCKQCGKAFCHLGSFQRHMIMHSGDGPHKCKICGKGFDFPGSARIHEGTHTLEKPYECKQCGKLLSHRSSFRRHMMAHTGDGPHKCTVCGKAFDSPSVFQRHERTHTGEKPYECKQCGKAFRTSSSLRKHETTHTGEQPYKCKCGKAFSDLFSFQSHETTHSEEEPYECKECGKAFSSFKYFCRHERTHSEEKSYECQICGKAFSRFSYLKTHERTHTAEKPYECKQCRKAFFWPSFLLRHERTHTGERPYECKHCGKAFSRSSFCREHERTHTGEKPYECKECGKAFSSLSSFNRHKRTHWKDIL.

The KRAB domain occupies 52–138 (VAFEDVAVNF…GETLSQIRNS (87 aa)). The C2H2-type 1; atypical zinc finger occupies 189–211 (YTHKQCGKGLSYRHSFQTCERPH). A C2H2-type 2; degenerate zinc finger spans residues 217–239 (YDCKECGKTFSSPGNLRRHMVVK). 15 C2H2-type zinc fingers span residues 245 to 267 (YKCE…ERTH), 273 to 295 (YECK…EKIH), 301 to 323 (YECK…ERTH), 329 to 351 (YKCK…ERIH), 357 to 379 (YTCK…MIMH), 385 to 407 (HKCK…EGTH), 413 to 435 (YECK…MMAH), 441 to 463 (HKCT…ERTH), 469 to 491 (YECK…ETTH), 497 to 518 (YKCK…ETTH), 524 to 546 (YECK…ERTH), 552 to 574 (YECQ…ERTH), 580 to 602 (YECK…ERTH), 608 to 630 (YECK…ERTH), and 636 to 658 (YECK…KRTH).

It belongs to the krueppel C2H2-type zinc-finger protein family.

It is found in the nucleus. Its function is as follows. May be involved in transcriptional regulation. The protein is Zinc finger protein 44 (ZNF44) of Homo sapiens (Human).